The chain runs to 353 residues: Protein RecA (353 aa).

Glycine 75 to threonine 82 serves as a coordination point for ATP.

This sequence belongs to the RecA family.

It localises to the cytoplasm. Its function is as follows. Can catalyze the hydrolysis of ATP in the presence of single-stranded DNA, the ATP-dependent uptake of single-stranded DNA by duplex DNA, and the ATP-dependent hybridization of homologous single-stranded DNAs. It interacts with LexA causing its activation and leading to its autocatalytic cleavage. This is Protein RecA from Cupriavidus necator (Alcaligenes eutrophus).